Here is a 2291-residue protein sequence, read N- to C-terminus: Protein Ycf2 A (2291 aa).

Gly-1642–Ser-1649 is an ATP binding site.

Belongs to the Ycf2 family.

It is found in the plastid. The protein resides in the chloroplast stroma. Functionally, probable ATPase of unknown function. Its presence in a non-photosynthetic plant (Epifagus virginiana) and experiments in tobacco indicate that it has an essential function which is probably not related to photosynthesis. The polypeptide is Protein Ycf2 A (ycf2-A) (Atropa belladonna (Belladonna)).